Consider the following 122-residue polypeptide: Large ribosomal subunit protein uL14 (122 aa).

The protein belongs to the universal ribosomal protein uL14 family. As to quaternary structure, part of the 50S ribosomal subunit. Forms a cluster with proteins L3 and L19. In the 70S ribosome, L14 and L19 interact and together make contacts with the 16S rRNA in bridges B5 and B8.

Functionally, binds to 23S rRNA. Forms part of two intersubunit bridges in the 70S ribosome. The chain is Large ribosomal subunit protein uL14 from Orientia tsutsugamushi (strain Ikeda) (Rickettsia tsutsugamushi).